The primary structure comprises 315 residues: tRNA uridine(34) hydroxylase (315 aa).

A Rhodanese domain is found at Met145–Lys235. Cys199 functions as the Cysteine persulfide intermediate in the catalytic mechanism.

The protein belongs to the TrhO family.

The catalysed reaction is uridine(34) in tRNA + AH2 + O2 = 5-hydroxyuridine(34) in tRNA + A + H2O. Its function is as follows. Catalyzes oxygen-dependent 5-hydroxyuridine (ho5U) modification at position 34 in tRNAs. The sequence is that of tRNA uridine(34) hydroxylase from Wigglesworthia glossinidia brevipalpis.